The sequence spans 227 residues: CDP-diacylglycerol--inositol 3-phosphatidyltransferase 1 (227 aa).

The next 2 helical transmembrane spans lie at 12–36 (LSVY…AFAV) and 42–61 (PLFS…DGWV). D55 and D58 together coordinate Mg(2+). Residues G59, R63, and S69 each coordinate a CDP-1,2-diacyl-sn-glycerol. 4 consecutive transmembrane segments (helical) span residues 73-95 (AVLD…SQIY), 101-122 (FLSL…TFLA), 142-165 (YGNR…LLLI), and 177-200 (VVAT…GWSM). Mg(2+) contacts are provided by D76 and D80. Catalysis depends on D80, which acts as the Proton acceptor.

Belongs to the CDP-alcohol phosphatidyltransferase class-I family. Mg(2+) is required as a cofactor. The cofactor is Mn(2+). Expressed in stems, flowers, shoots and roots. Present in epidermal tissues.

The protein localises to the membrane. The enzyme catalyses a CDP-1,2-diacyl-sn-glycerol + myo-inositol = a 1,2-diacyl-sn-glycero-3-phospho-(1D-myo-inositol) + CMP + H(+). Catalyzes the biosynthesis of phosphatidylinositol (PtdIns) as well as PtdIns:inositol exchange reaction. May thus act to reduce an excessive cellular PtdIns content. The exchange activity is due to the reverse reaction of PtdIns synthase and is dependent on CMP, which is tightly bound to the enzyme. This is CDP-diacylglycerol--inositol 3-phosphatidyltransferase 1 (PIS1) from Arabidopsis thaliana (Mouse-ear cress).